We begin with the raw amino-acid sequence, 557 residues long: Organic cation/carnitine transporter 2 (557 aa).

Topologically, residues 1-20 (MRDYDEVTAFLGEWGPFQRL) are cytoplasmic. The chain crosses the membrane as a helical span at residues 21-41 (IFFLLSASIIPNGFNGMSIVF). At 42–142 (LAGTPEHRCL…DLVCKDDWKA (101 aa)) the chain is on the extracellular side. Residues Asn-57, Asn-64, and Asn-91 are each glycosylated (N-linked (GlcNAc...) asparagine). A helical transmembrane segment spans residues 143–163 (PLTTSLFFVGVLMGSFISGQL). Over 164-172 (SDRFGRKNV) the chain is Cytoplasmic. Residues 173–193 (LFLTMGMQTGFSFLQLFSVNF) traverse the membrane as a helical segment. At 194 to 197 (EMFT) the chain is on the extracellular side. Residues 198–218 (VLFVLVGMGQISNYVAAFVLG) form a helical membrane-spanning segment. ATP is bound at residue 218-225 (GTEILSKS). Residues 219 to 232 (TEILSKSIRIIFAT) are Cytoplasmic-facing. Residues 233-253 (LGVCIFYAFGFMVLPLFAYFI) traverse the membrane as a helical segment. At 254–257 (RDWR) the chain is on the extracellular side. The chain crosses the membrane as a helical span at residues 258–278 (MLLLALTVPGVLCGALWWFIP). Topologically, residues 279–341 (ESPRWLISQG…YDLVRTRNIR (63 aa)) are cytoplasmic. Residues 342–362 (IITIMSIILWLTISVGYFGLS) traverse the membrane as a helical segment. Residues 363 to 373 (LDTPNLHGDIY) lie on the Extracellular side of the membrane. The helical transmembrane segment at 374–394 (VNCFLLAAVEVPAYVLAWLLL) threads the bilayer. The Cytoplasmic portion of the chain corresponds to 395–406 (QHLPRRYSISAA). A helical transmembrane segment spans residues 407 to 427 (LFLGGSVLLFIQLVPSELFYL). Over 428-430 (STA) the chain is Extracellular. Residues 431–451 (LVMVGKFGITSAYSMVYVYTA) traverse the membrane as a helical segment. Residues 452-462 (ELYPTVVRNMG) are Cytoplasmic-facing. Residues 463 to 483 (VGVSSTASRLGSILSPYFVYL) form a helical membrane-spanning segment. Residues 484–488 (GAYDR) are Extracellular-facing. Residue Tyr-486 is modified to Phosphotyrosine. The chain crosses the membrane as a helical span at residues 489 to 509 (FLPYILMGSLTILTAILTLFF). Topologically, residues 510–557 (PESFGAPLPDTIDQMLRVKGIKQWQIQSQTRTQKDGGESPTVLKSTAF) are cytoplasmic. Residues 537 to 557 (SQTRTQKDGGESPTVLKSTAF) are disordered. Ser-548 is subject to Phosphoserine. A Phosphothreonine modification is found at Thr-550.

It belongs to the major facilitator (TC 2.A.1) superfamily. Organic cation transporter (TC 2.A.1.19) family. In terms of assembly, interacts with PDZK1. As to expression, expressed in the proximal and distal tubules and in the glomeruli in the kidney, in the myocardium, valves, and arterioles in the heart, in the labyrinthine layer of the placenta, and in the cortex, hippocampus, and cerebellum in the brain. Expressed in Sertoli cells in testis.

It is found in the cell membrane. It localises to the apical cell membrane. The protein localises to the basal cell membrane. It carries out the reaction (R)-carnitine(out) + Na(+)(out) = (R)-carnitine(in) + Na(+)(in). The catalysed reaction is O-acetyl-(R)-carnitine(out) + Na(+)(out) = O-acetyl-(R)-carnitine(in) + Na(+)(in). The enzyme catalyses O-propanoyl-(R)-carnitine(out) + Na(+)(out) = O-propanoyl-(R)-carnitine(in) + Na(+)(in). It catalyses the reaction glycine betaine(out) + Na(+)(out) = glycine betaine(in) + Na(+)(in). It carries out the reaction glycine betaine(out) + (R)-carnitine(in) = glycine betaine(in) + (R)-carnitine(out). The catalysed reaction is O-butanoyl-(R)-carnitine(out) + Na(+)(out) = O-butanoyl-(R)-carnitine(in) + Na(+)(in). The enzyme catalyses (S)-carnitine(out) + Na(+)(out) = (S)-carnitine(in) + Na(+)(in). It catalyses the reaction an O-acyl-(R)-carnitine(out) + Na(+)(out) = an O-acyl-(R)-carnitine(in) + Na(+)(in). It carries out the reaction L-glutamyl-L-arginyl-glycyl-L-methionyl-L-threonine(out) + Na(+)(out) = L-glutamyl-L-arginyl-glycyl-L-methionyl-L-threonine(in) + Na(+)(in). The catalysed reaction is N,N-dimethylglycine(out) + Na(+)(out) = N,N-dimethylglycine(in) + Na(+)(in). Its activity is regulated as follows. Inhibited by emetine, quinidine and verapamil. The IC(50) of emetine is 4.2 uM. Not inhibited by valproic acid. Transport of (R)-carnitine is stimulated by cholesterol in the plasma membrane. In terms of biological role, sodium-ion dependent, high affinity carnitine transporter. Involved in the active cellular uptake of carnitine. Transports one sodium ion with one molecule of carnitine. Also transports organic cations such as tetraethylammonium (TEA) without the involvement of sodium. Also relative uptake activity ratio of carnitine to TEA is 11.3. May also contribute to regulate the transport of organic compounds in testis across the blood-testis-barrier. The polypeptide is Organic cation/carnitine transporter 2 (Slc22a5) (Rattus norvegicus (Rat)).